Consider the following 355-residue polypeptide: UPF0421 protein BCE_2776 (355 aa).

4 helical membrane-spanning segments follow: residues 19–39 (IAVF…IFAV), 74–94 (FTFF…FTIV), 109–129 (TLTA…AFLI), and 131–151 (LATT…ILPP).

This sequence belongs to the UPF0421 family.

It localises to the cell membrane. This chain is UPF0421 protein BCE_2776, found in Bacillus cereus (strain ATCC 10987 / NRS 248).